Here is a 460-residue protein sequence, read N- to C-terminus: ATP synthase subunit beta (460 aa).

150–157 contributes to the ATP binding site; the sequence is GGAGVGKT.

It belongs to the ATPase alpha/beta chains family. In terms of assembly, F-type ATPases have 2 components, CF(1) - the catalytic core - and CF(0) - the membrane proton channel. CF(1) has five subunits: alpha(3), beta(3), gamma(1), delta(1), epsilon(1). CF(0) has three main subunits: a(1), b(2) and c(9-12). The alpha and beta chains form an alternating ring which encloses part of the gamma chain. CF(1) is attached to CF(0) by a central stalk formed by the gamma and epsilon chains, while a peripheral stalk is formed by the delta and b chains.

It is found in the cell inner membrane. The enzyme catalyses ATP + H2O + 4 H(+)(in) = ADP + phosphate + 5 H(+)(out). Functionally, produces ATP from ADP in the presence of a proton gradient across the membrane. The catalytic sites are hosted primarily by the beta subunits. The protein is ATP synthase subunit beta of Edwardsiella ictaluri (strain 93-146).